A 137-amino-acid polypeptide reads, in one-letter code: Small ribosomal subunit protein uS12 (137 aa).

A compositionally biased stretch (polar residues) spans 31–41; it reads MSRKQTNNTAP. Residues 31-57 form a disordered region; sequence MSRKQTNNTAPQKRGVATRVGTMTPKK. 3-methylthioaspartic acid is present on Asp-102.

Belongs to the universal ribosomal protein uS12 family. As to quaternary structure, part of the 30S ribosomal subunit. Contacts proteins S8 and S17. May interact with IF1 in the 30S initiation complex.

Its function is as follows. With S4 and S5 plays an important role in translational accuracy. Interacts with and stabilizes bases of the 16S rRNA that are involved in tRNA selection in the A site and with the mRNA backbone. Located at the interface of the 30S and 50S subunits, it traverses the body of the 30S subunit contacting proteins on the other side and probably holding the rRNA structure together. The combined cluster of proteins S8, S12 and S17 appears to hold together the shoulder and platform of the 30S subunit. The chain is Small ribosomal subunit protein uS12 from Oenococcus oeni (strain ATCC BAA-331 / PSU-1).